The following is a 163-amino-acid chain: Biotin carboxyl carrier protein of acetyl-CoA carboxylase (163 aa).

Residues 85–161 enclose the Biotinyl-binding domain; it reads GDFIVSPLVG…QFGSKLFRIV (77 aa). Lys-127 carries the N6-biotinyllysine modification.

As to quaternary structure, homodimer.

The protein operates within lipid metabolism; fatty acid biosynthesis. Functionally, this protein is a component of the acetyl coenzyme A carboxylase complex; first, biotin carboxylase catalyzes the carboxylation of the carrier protein and then the transcarboxylase transfers the carboxyl group to form malonyl-CoA. This is Biotin carboxyl carrier protein of acetyl-CoA carboxylase (accB) from Chlamydia muridarum (strain MoPn / Nigg).